Consider the following 277-residue polypeptide: Putative phosphoenolpyruvate synthase regulatory protein (277 aa).

An ADP-binding site is contributed by 157–164; sequence GVSRCGKT.

It belongs to the pyruvate, phosphate/water dikinase regulatory protein family. PSRP subfamily.

It carries out the reaction [pyruvate, water dikinase] + ADP = [pyruvate, water dikinase]-phosphate + AMP + H(+). It catalyses the reaction [pyruvate, water dikinase]-phosphate + phosphate + H(+) = [pyruvate, water dikinase] + diphosphate. Its function is as follows. Bifunctional serine/threonine kinase and phosphorylase involved in the regulation of the phosphoenolpyruvate synthase (PEPS) by catalyzing its phosphorylation/dephosphorylation. The protein is Putative phosphoenolpyruvate synthase regulatory protein of Erwinia tasmaniensis (strain DSM 17950 / CFBP 7177 / CIP 109463 / NCPPB 4357 / Et1/99).